Reading from the N-terminus, the 156-residue chain is Small ribosomal subunit protein uS7 (156 aa).

It belongs to the universal ribosomal protein uS7 family. Part of the 30S ribosomal subunit. Contacts proteins S9 and S11.

Its function is as follows. One of the primary rRNA binding proteins, it binds directly to 16S rRNA where it nucleates assembly of the head domain of the 30S subunit. Is located at the subunit interface close to the decoding center, probably blocks exit of the E-site tRNA. The protein is Small ribosomal subunit protein uS7 of Rhizobium leguminosarum bv. trifolii (strain WSM2304).